The sequence spans 459 residues: ATP-binding protein Uup-like (459 aa).

The ABC transporter domain occupies 132 to 350 (FEMEDVSYEI…QQANFWASKA (219 aa)). Position 164-171 (164-171 (GPNGCGKT)) interacts with ATP. Residues 357 to 375 (AKKSEPLKEESAVKNDRTS) show a composition bias toward basic and acidic residues. The tract at residues 357–381 (AKKSEPLKEESAVKNDRTSKPKSVK) is disordered.

It belongs to the ABC transporter superfamily. ABCF family. Uup subfamily.

It localises to the cytoplasm. The enzyme catalyses ATP + H2O = ADP + phosphate + H(+). In terms of biological role, might play a role in ribosome assembly or function; this is missing the first ABC transporter domain compared to paralogs. The polypeptide is ATP-binding protein Uup-like (uup-B) (Haemophilus influenzae (strain ATCC 51907 / DSM 11121 / KW20 / Rd)).